A 448-amino-acid chain; its full sequence is Adenylosuccinate synthetase (448 aa).

GTP is bound by residues 22–28 (GDEGKGK) and 50–52 (GHT). Residue D23 is the Proton acceptor of the active site. The Mg(2+) site is built by D23 and G50. IMP-binding positions include 23 to 26 (DEGK), 48 to 51 (NAGH), T139, R153, Q234, T249, and R321. H51 acts as the Proton donor in catalysis. 317–323 (SVTGRPR) is a substrate binding site. GTP is bound by residues R323, 349–351 (KLD), and 431–433 (STG).

The protein belongs to the adenylosuccinate synthetase family. Homodimer. The cofactor is Mg(2+).

The protein resides in the cytoplasm. The catalysed reaction is IMP + L-aspartate + GTP = N(6)-(1,2-dicarboxyethyl)-AMP + GDP + phosphate + 2 H(+). It participates in purine metabolism; AMP biosynthesis via de novo pathway; AMP from IMP: step 1/2. Plays an important role in the de novo pathway of purine nucleotide biosynthesis. Catalyzes the first committed step in the biosynthesis of AMP from IMP. The chain is Adenylosuccinate synthetase from Paraburkholderia phytofirmans (strain DSM 17436 / LMG 22146 / PsJN) (Burkholderia phytofirmans).